We begin with the raw amino-acid sequence, 251 residues long: Hydroxyacylglutathione hydrolase (251 aa).

Residues H53, H55, D57, H58, H110, D127, and H165 each coordinate Zn(2+).

It belongs to the metallo-beta-lactamase superfamily. Glyoxalase II family. Monomer. It depends on Zn(2+) as a cofactor.

The enzyme catalyses an S-(2-hydroxyacyl)glutathione + H2O = a 2-hydroxy carboxylate + glutathione + H(+). It participates in secondary metabolite metabolism; methylglyoxal degradation; (R)-lactate from methylglyoxal: step 2/2. In terms of biological role, thiolesterase that catalyzes the hydrolysis of S-D-lactoyl-glutathione to form glutathione and D-lactic acid. The chain is Hydroxyacylglutathione hydrolase from Erwinia tasmaniensis (strain DSM 17950 / CFBP 7177 / CIP 109463 / NCPPB 4357 / Et1/99).